We begin with the raw amino-acid sequence, 350 residues long: Transmembrane protein 115 (350 aa).

Residues 1-19 (MQRALPGARQHLGAILASA) lie on the Cytoplasmic side of the membrane. The tract at residues 1-205 (MQRALPGARQ…FGLLSSWVYL (205 aa)) is mediates homooligomerization. The helical transmembrane segment at 20 to 40 (SVVVKALCAVVLFLYLLSFAV) threads the bilayer. The Lumenal portion of the chain corresponds to 41–97 (DTGCLAVTPGYLFPPNFWIWTLATHGLMEQHVWDVAISLATVVVAGRLLEPLWGALE). A helical transmembrane segment spans residues 98-118 (LLIFFSVVNVSVGLLGALAYL). Topologically, residues 119–126 (LTYMASFN) are cytoplasmic. A helical membrane pass occupies residues 127–147 (LVYLFTIRIHGALGFLGGVLV). Residues 148 to 165 (ALKQTMGDCVVLRVPQVR) are Lumenal-facing. Residues 166–186 (VSVVPMLLLALLLLLRLATLL) form a helical membrane-spanning segment. Residues 187–350 (QSPALASYGF…LITLETAPLL (164 aa)) are Cytoplasmic-facing. Residues 206-229 (RFYQRHSRGRGDMADHFAFATFFP) are mediates localization to the Golgi. The interval 299 to 350 (EDQSAWPSMDDDEEEAGAKTDSPLPLEEASTPPGKVTVPESSLITLETAPLL) is disordered. A Phosphothreonine modification is found at Thr329.

The protein belongs to the TMEM115 family. Homooligomer. Interacts with COPB1. May interact with LMAN1. Interacts with the COG complex; probably through COG3.

The protein localises to the golgi apparatus. Its subcellular location is the golgi stack membrane. May play a role in retrograde transport of proteins from the Golgi to the endoplasmic reticulum. May indirectly play a role in protein glycosylation in the Golgi. This Mus musculus (Mouse) protein is Transmembrane protein 115.